A 331-amino-acid polypeptide reads, in one-letter code: Fructose-1,6-bisphosphatase class 1 (331 aa).

Residues glutamate 80, aspartate 98, leucine 100, and aspartate 101 each coordinate Mg(2+). Substrate is bound by residues 101–104 and asparagine 189; that span reads DGSS. Residue glutamate 261 coordinates Mg(2+).

Belongs to the FBPase class 1 family. Homotetramer. Requires Mg(2+) as cofactor.

The protein localises to the cytoplasm. The catalysed reaction is beta-D-fructose 1,6-bisphosphate + H2O = beta-D-fructose 6-phosphate + phosphate. It participates in carbohydrate biosynthesis; gluconeogenesis. This is Fructose-1,6-bisphosphatase class 1 from Rhodobacter capsulatus (strain ATCC BAA-309 / NBRC 16581 / SB1003).